The primary structure comprises 313 residues: Porphobilinogen deaminase (313 aa).

Residue Cys242 is modified to S-(dipyrrolylmethanemethyl)cysteine.

It belongs to the HMBS family. In terms of assembly, monomer. Dipyrromethane is required as a cofactor.

The enzyme catalyses 4 porphobilinogen + H2O = hydroxymethylbilane + 4 NH4(+). It participates in porphyrin-containing compound metabolism; protoporphyrin-IX biosynthesis; coproporphyrinogen-III from 5-aminolevulinate: step 2/4. Functionally, tetrapolymerization of the monopyrrole PBG into the hydroxymethylbilane pre-uroporphyrinogen in several discrete steps. The sequence is that of Porphobilinogen deaminase from Pseudomonas syringae pv. syringae (strain B728a).